The primary structure comprises 301 residues: Glycine--tRNA ligase alpha subunit (301 aa).

It belongs to the class-II aminoacyl-tRNA synthetase family. In terms of assembly, tetramer of two alpha and two beta subunits.

Its subcellular location is the cytoplasm. It carries out the reaction tRNA(Gly) + glycine + ATP = glycyl-tRNA(Gly) + AMP + diphosphate. This is Glycine--tRNA ligase alpha subunit from Pseudoalteromonas atlantica (strain T6c / ATCC BAA-1087).